Here is a 383-residue protein sequence, read N- to C-terminus: Protein delta homolog 2 (383 aa).

The first 26 residues, 1–26 (MPSGCRCLHLVCLLCILGAPVKPARG), serve as a signal peptide directing secretion. 4 EGF-like domains span residues 27-58 (NDCS…LHCE), 62-89 (RMPG…KFCD), 91-129 (DEHI…RDCE), and 131-172 (KAGP…ARCE). Topologically, residues 27–306 (NDCSSLCDLA…RQEAGLGEPS (280 aa)) are extracellular. Intrachain disulfides connect C29-C40, C33-C46, C48-C57, C66-C71, C79-C88, C95-C107, C101-C117, C119-C128, C135-C148, C142-C160, C162-C171, C178-C189, C183-C198, C200-C209, C216-C227, C221-C236, and C238-C247. N157 is a glycosylation site (N-linked (GlcNAc...) asparagine). In terms of domain architecture, EGF-like 5; calcium-binding spans 174–210 (NVDDCLMRPCANGATCLDGINRFSCLCPEGFTGRFCT). Residues 212–248 (NLDDCASRPCQRGARCRDRVHDFDCLCPSGYGGKTCE) form the EGF-like 6; calcium-binding domain. Residues 307–327 (LVAVVVFGAVTAALVLSTVLL) traverse the membrane as a helical segment. The Cytoplasmic segment spans residues 328–383 (TLRAWRRGFCPPGPCCYPAPHYAPARQDQECQVSMLPTGLPLPPDLPPEPGKTTAL). Positions 364-383 (PTGLPLPPDLPPEPGKTTAL) are disordered. Positions 367–377 (LPLPPDLPPEP) are enriched in pro residues.

The protein resides in the membrane. Regulates adipogenesis. The chain is Protein delta homolog 2 (DLK2) from Bos taurus (Bovine).